Consider the following 698-residue polypeptide: Polyribonucleotide nucleotidyltransferase (698 aa).

Residues D490 and D496 each coordinate Mg(2+). Residues P557–I616 enclose the KH domain. An S1 motif domain is found at G626 to R694.

It belongs to the polyribonucleotide nucleotidyltransferase family. It depends on Mg(2+) as a cofactor.

It is found in the cytoplasm. The catalysed reaction is RNA(n+1) + phosphate = RNA(n) + a ribonucleoside 5'-diphosphate. Its function is as follows. Involved in mRNA degradation. Catalyzes the phosphorolysis of single-stranded polyribonucleotides processively in the 3'- to 5'-direction. This chain is Polyribonucleotide nucleotidyltransferase, found in Staphylococcus aureus (strain Mu3 / ATCC 700698).